Reading from the N-terminus, the 395-residue chain is Probable hercynylcysteine sulfoxide lyase (395 aa).

The tract at residues 1-21 (MQDEAMRRSGANSPAGDSLAD) is disordered. Lysine 220 is subject to N6-(pyridoxal phosphate)lysine.

This sequence belongs to the class-V pyridoxal-phosphate-dependent aminotransferase family. EgtE subfamily. Pyridoxal 5'-phosphate is required as a cofactor.

The enzyme catalyses S-(hercyn-2-yl)-L-cysteine S-oxide + AH2 + H(+) = ergothioneine + pyruvate + A + NH4(+). It functions in the pathway amino-acid biosynthesis; ergothioneine biosynthesis. Functionally, probably catalyzes the conversion of hercynylcysteine sulfoxide to ergothioneine. ERG is one of the major redox buffers which protects bacteria against redox stressors and antibiotics; loss of ERG or mycothiol (MSH, the other major redox buffer in this bacteria) leads to respiratory alterations and bioenergetic deficiencies that negatively impact virulence. This chain is Probable hercynylcysteine sulfoxide lyase, found in Mycobacterium tuberculosis (strain CDC 1551 / Oshkosh).